The following is a 157-amino-acid chain: Dihydrofolate reductase type 1 (157 aa).

In terms of domain architecture, DHFR spans 2–156; sequence KLSLMVAISK…INYSYQIWQK (155 aa).

The protein belongs to the dihydrofolate reductase family. Homodimer.

It carries out the reaction (6S)-5,6,7,8-tetrahydrofolate + NADP(+) = 7,8-dihydrofolate + NADPH + H(+). It functions in the pathway cofactor biosynthesis; tetrahydrofolate biosynthesis; 5,6,7,8-tetrahydrofolate from 7,8-dihydrofolate: step 1/1. Key enzyme in folate metabolism. Catalyzes an essential reaction for de novo glycine and purine synthesis, and for DNA precursor synthesis. This Escherichia coli protein is Dihydrofolate reductase type 1 (dhfrI).